Reading from the N-terminus, the 326-residue chain is Zinc transporter 11 (326 aa).

Positions 1–20 are cleaved as a signal peptide; it reads MSRSLVFFFLFLVLVVPCLS. At 21-49 the chain is on the extracellular side; it reads HGTGGDHDDDEASHVKSSDLKSKSLISVK. The chain crosses the membrane as a helical span at residues 50–70; sequence IACLVIIFVLTFISGVSPYFL. Residues 71–75 are Cytoplasmic-facing; sequence KWSQG. The helical transmembrane segment at 76 to 96 threads the bilayer; sequence FLVLGTQFAGGVFLATALMHF. Over 97–121 the chain is Extracellular; it reads LSDADETFRGLLTAEGESEPSPAYP. A helical membrane pass occupies residues 122-142; the sequence is FAYMLACAGFMLTMLADSVIA. Residues 143–174 lie on the Cytoplasmic side of the membrane; it reads HIYSKTQNDLELQGEDKSNQRSATTETSIGDS. A helical membrane pass occupies residues 175–195; the sequence is ILLIVALCFHSVFEGIAIGIS. The Extracellular segment spans residues 196–203; it reads ETKSDAWR. A helical membrane pass occupies residues 204-224; it reads ALWTITLHKIFAAIAMGIALL. At 225 to 235 the chain is on the cytoplasmic side; sequence RMIPDRPLFSS. Residues 236-256 traverse the membrane as a helical segment; sequence ITYSFAFAISSPIGVAIGIVI. The Extracellular portion of the chain corresponds to 257–262; that stretch reads DATTQG. The chain crosses the membrane as a helical span at residues 263-283; sequence SIADWIFALSMSLACGVFVYV. Residues 284–305 are Cytoplasmic-facing; that stretch reads SVNHLLAKGYRPNKKVHVDEPR. The helical transmembrane segment at 306 to 326 threads the bilayer; sequence YKFLAVLFGVVVIAIVMIWDT.

Belongs to the ZIP transporter (TC 2.A.5) family.

The protein localises to the cell membrane. Its function is as follows. Probably mediates zinc uptake from the rhizosphere. The polypeptide is Zinc transporter 11 (ZIP11) (Arabidopsis thaliana (Mouse-ear cress)).